Here is a 580-residue protein sequence, read N- to C-terminus: Netrin-3 (580 aa).

A signal peptide spans 1–27 (MPGWPWGLLLTAGTLFAALSPGPPAPA). The 219-residue stretch at 36–254 (APRGCVPGLV…AATDLQVGGR (219 aa)) folds into the Laminin N-terminal domain. The tract at residues 62–83 (PATRACDASDPRRAHSPALLTS) is disordered. Cystine bridges form between Cys92–Cys125, Cys255–Cys264, Cys257–Cys274, Cys276–Cys285, Cys288–Cys308, Cys311–Cys320, Cys313–Cys338, Cys341–Cys350, Cys353–Cys371, Cys374–Cys386, Cys376–Cys393, Cys395–Cys404, Cys407–Cys421, Cys441–Cys514, and Cys460–Cys577. The N-linked (GlcNAc...) asparagine glycan is linked to Asn104. Laminin EGF-like domains are found at residues 255–308 (CKCN…SHAC), 311–371 (CSCN…RRAC), and 374–421 (CDCH…VAPC). An N-linked (GlcNAc...) asparagine glycan is attached at Asn387. Residues 441-577 (CDSHCKPARG…LQRRERRGRC (137 aa)) enclose the NTR domain. A Cell attachment site; atypical motif is present at residues 500–502 (RGS).

In terms of tissue distribution, spinal cord.

It localises to the secreted. It is found in the extracellular space. The protein localises to the extracellular matrix. In terms of biological role, netrins control guidance of CNS commissural axons and peripheral motor axons. In Homo sapiens (Human), this protein is Netrin-3 (NTN3).